The primary structure comprises 450 residues: Glucose-6-phosphate isomerase (450 aa).

The active-site Proton donor is Glu-291. Active-site residues include His-312 and Lys-426.

Belongs to the GPI family.

The protein localises to the cytoplasm. The enzyme catalyses alpha-D-glucose 6-phosphate = beta-D-fructose 6-phosphate. It participates in carbohydrate biosynthesis; gluconeogenesis. It functions in the pathway carbohydrate degradation; glycolysis; D-glyceraldehyde 3-phosphate and glycerone phosphate from D-glucose: step 2/4. Catalyzes the reversible isomerization of glucose-6-phosphate to fructose-6-phosphate. The protein is Glucose-6-phosphate isomerase of Clostridium perfringens (strain SM101 / Type A).